The following is a 679-amino-acid chain: MTERKREHKDRKQNKNSPKNQSKVTKFLKWFFIGILLLGITAVTVVGIYVLSIIRSSPELDVQAIQSLNQPSILYDDQGNFMDNVITREQRYVVKSEEIPDNLKKAFVAIEDERFYEHKGIDIKRIFGVIASNIKGKLSGSNTVQGASTITQQLIKNAVLTNEVSYERKIKEMYLALELEKHLSKDEILTTYLNTIPMGGYQYGVSAAAQRFFSKNVSDLNLVECAYLGGLTQAPTSYDGLSEANKENPSRYLNRTKSVLFKMHELGYISSEQYNDAINEIDTNGIKFTPNNKLSKTNFEWFTRPAITQVKQDLMDKYKYTQEEVDKLIANGGLKIYTSMDRNLQNNVQKVLDDPNNYKAITNNPNEKNEDGVYKLQASATIIDYKTGHVKALVGGRGEQPAMSHNRAYYDLKSIGSATKPLTVYGPAIDLGLGGAGSVVNDSPLSNKELSSTGYKDQPKNEYNSYRGPLTFREAIKISSNLAAIKVANEVGVSNSIAYGEKLGLVYGPHSRGISTTALGQFQNDPNNPDGGNTYTLASAFGVFGNNGVKTNAKLYTKVLDSHGNVILDTSTPEETKIFSPQASYIVYDMLKDQVESGSAKSAKFGNIPVAGKTGTTTGDKDYLFAGLTPYYSAAIWIGYDKPREMRTSSGTVTSPIFGKIMGLAHKDLQYKEVDNLVE.

The segment covering 1–14 (MTERKREHKDRKQN) has biased composition (basic residues). Positions 1–20 (MTERKREHKDRKQNKNSPKN) are disordered. Residues 1 to 30 (MTERKREHKDRKQNKNSPKNQSKVTKFLKW) are Cytoplasmic-facing. A helical; Signal-anchor for type II membrane protein membrane pass occupies residues 31-51 (FFIGILLLGITAVTVVGIYVL). Over 52–679 (SIIRSSPELD…QYKEVDNLVE (628 aa)) the chain is Extracellular. The interval 72–244 (SILYDDQGNF…PTSYDGLSEA (173 aa)) is transglycosylase. The active-site Proton donor; for transglycosylase activity is glutamate 111. The transpeptidase stretch occupies residues 378 to 663 (ASATIIDYKT…TSPIFGKIMG (286 aa)). Serine 417 acts as the Acyl-ester intermediate; for transpeptidase activity in catalysis.

The protein in the N-terminal section; belongs to the glycosyltransferase 51 family. This sequence in the C-terminal section; belongs to the transpeptidase family.

The protein resides in the cell membrane. The enzyme catalyses [GlcNAc-(1-&gt;4)-Mur2Ac(oyl-L-Ala-gamma-D-Glu-L-Lys-D-Ala-D-Ala)](n)-di-trans,octa-cis-undecaprenyl diphosphate + beta-D-GlcNAc-(1-&gt;4)-Mur2Ac(oyl-L-Ala-gamma-D-Glu-L-Lys-D-Ala-D-Ala)-di-trans,octa-cis-undecaprenyl diphosphate = [GlcNAc-(1-&gt;4)-Mur2Ac(oyl-L-Ala-gamma-D-Glu-L-Lys-D-Ala-D-Ala)](n+1)-di-trans,octa-cis-undecaprenyl diphosphate + di-trans,octa-cis-undecaprenyl diphosphate + H(+). The catalysed reaction is Preferential cleavage: (Ac)2-L-Lys-D-Ala-|-D-Ala. Also transpeptidation of peptidyl-alanyl moieties that are N-acyl substituents of D-alanine.. The protein operates within cell wall biogenesis; peptidoglycan biosynthesis. Cell wall formation. Synthesis of cross-linked peptidoglycan from the lipid intermediates. The enzyme has a penicillin-insensitive transglycosylase N-terminal domain (formation of linear glycan strands) and a penicillin-sensitive transpeptidase C-terminal domain (cross-linking of the peptide subunits). The sequence is that of Penicillin-binding protein 1A (pbpA) from Clostridium perfringens (strain 13 / Type A).